Here is a 113-residue protein sequence, read N- to C-terminus: U11-theraphotoxin-Hhn1a (113 aa).

The first 21 residues, 1–21 (MNTVRVTFLLVFVLAVSLGQA), serve as a signal peptide directing secretion. Residues 22–74 (DKDENRMEMQEKTEQGKSYLDFAENLLLQKLEELEAKLLEEDSEESRNSRQRR) constitute a propeptide that is removed on maturation. The tract at residues 61–83 (EEDSEESRNSRQRRCIGEGVPCD) is disordered. 3 cysteine pairs are disulfide-bonded: cysteine 75–cysteine 90, cysteine 82–cysteine 95, and cysteine 89–cysteine 110.

It belongs to the neurotoxin 14 (magi-1) family. 01 (HNTX-16) subfamily. Expressed by the venom gland.

It localises to the secreted. Functionally, probable ion channel inhibitor. This Cyriopagopus hainanus (Chinese bird spider) protein is U11-theraphotoxin-Hhn1a.